A 436-amino-acid polypeptide reads, in one-letter code: Chromosomal replication initiator protein DnaA (436 aa).

The tract at residues 1 to 80 (MSHEAVWQHV…QAPRFELRVV (80 aa)) is domain I, interacts with DnaA modulators. Residues 80-100 (VPGVVVQEDIFQAAPAEAPRP) are domain II. The segment at 101–317 (KLNPKYTFEN…GALMRAIAFA (217 aa)) is domain III, AAA+ region. Residues Gly145, Gly147, Lys148, and Thr149 each contribute to the ATP site. The segment at 318 to 436 (SLNGVELTRA…LLRTLREACT (119 aa)) is domain IV, binds dsDNA.

The protein belongs to the DnaA family. In terms of assembly, oligomerizes as a right-handed, spiral filament on DNA at oriC.

It localises to the cytoplasm. It carries out the reaction ATP + H2O = ADP + phosphate + H(+). In terms of biological role, plays an essential role in the initiation and regulation of chromosomal replication. ATP-DnaA binds to the origin of replication (oriC) to initiate formation of the DNA replication initiation complex once per cell cycle. Binds the DnaA box (a 9 base pair repeat at the origin) and separates the double-stranded (ds)DNA. Forms a right-handed helical filament on oriC DNA; dsDNA binds to the exterior of the filament while single-stranded (ss)DNA is stabiized in the filament's interior. The ATP-DnaA-oriC complex binds and stabilizes one strand of the AT-rich DNA unwinding element (DUE), permitting loading of DNA polymerase. After initiation quickly degrades to an ADP-DnaA complex that is not apt for DNA replication. Binds acidic phospholipids. The DnaA box consensus is 5'-TTATC[CA]A[CA]A-3' in this bacterium; oriC consists of 13 clustered DnaA boxes and a 40 base pair AT-rich region. ATP-DnaA binds cooperatively to multiple DnaA boxes, while ADP-DnaA binds with low cooperativity to the individual DnaA boxes. About 16-18 DnaA protein molecules bind their sites in oriC. Has a slow ATPase activity. Binds linear and supercoiled DNA. This chain is Chromosomal replication initiator protein DnaA, found in Thermus thermophilus (strain ATCC 27634 / DSM 579 / HB8).